A 364-amino-acid polypeptide reads, in one-letter code: Aminomethyltransferase (364 aa).

Belongs to the GcvT family. In terms of assembly, the glycine cleavage system is composed of four proteins: P, T, L and H.

It catalyses the reaction N(6)-[(R)-S(8)-aminomethyldihydrolipoyl]-L-lysyl-[protein] + (6S)-5,6,7,8-tetrahydrofolate = N(6)-[(R)-dihydrolipoyl]-L-lysyl-[protein] + (6R)-5,10-methylene-5,6,7,8-tetrahydrofolate + NH4(+). Functionally, the glycine cleavage system catalyzes the degradation of glycine. The chain is Aminomethyltransferase from Shewanella baltica (strain OS223).